The chain runs to 309 residues: Homoserine kinase (309 aa).

85–95 (PYGLGLGSSGS) serves as a coordination point for ATP.

Belongs to the GHMP kinase family. Homoserine kinase subfamily.

It is found in the cytoplasm. It catalyses the reaction L-homoserine + ATP = O-phospho-L-homoserine + ADP + H(+). The protein operates within amino-acid biosynthesis; L-threonine biosynthesis; L-threonine from L-aspartate: step 4/5. Functionally, catalyzes the ATP-dependent phosphorylation of L-homoserine to L-homoserine phosphate. The protein is Homoserine kinase of Thermoplasma volcanium (strain ATCC 51530 / DSM 4299 / JCM 9571 / NBRC 15438 / GSS1).